A 122-amino-acid polypeptide reads, in one-letter code: Large ribosomal subunit protein uL18 (122 aa).

This sequence belongs to the universal ribosomal protein uL18 family. In terms of assembly, part of the 50S ribosomal subunit; part of the 5S rRNA/L5/L18/L25 subcomplex. Contacts the 5S and 23S rRNAs.

In terms of biological role, this is one of the proteins that bind and probably mediate the attachment of the 5S RNA into the large ribosomal subunit, where it forms part of the central protuberance. This chain is Large ribosomal subunit protein uL18, found in Heliobacterium modesticaldum (strain ATCC 51547 / Ice1).